The primary structure comprises 117 residues: Zinc metalloproteinase/disintegrin (117 aa).

Residues 36–117 (TPVSGNELLE…AGCPRNPFHA (82 aa)) enclose the Disintegrin domain. 6 cysteine pairs are disulfide-bonded: cysteine 50–cysteine 65, cysteine 52–cysteine 60, cysteine 59–cysteine 82, cysteine 73–cysteine 79, cysteine 78–cysteine 103, and cysteine 91–cysteine 110. Positions 95–97 (RGD) match the Cell attachment site motif.

This sequence belongs to the venom metalloproteinase (M12B) family. P-II subfamily. P-IIa sub-subfamily. As to quaternary structure, monomer. Zn(2+) is required as a cofactor. Expressed by the venom gland.

Its subcellular location is the secreted. In terms of biological role, impairs hemostasis in the envenomed animal. Its function is as follows. Inhibits platelet aggregation and bone resorption. The polypeptide is Zinc metalloproteinase/disintegrin (Gloydius halys (Chinese water mocassin)).